Here is a 587-residue protein sequence, read N- to C-terminus: Putative inactive receptor-like protein kinase At1g64210 (587 aa).

An N-terminal signal peptide occupies residues 1 to 19; sequence MQIFLFFFSLILCFVLISS. The Extracellular segment spans residues 20–232; the sequence is QTLEDDKKAL…KTPFGLSQLA (213 aa). Residues asparagine 37 and asparagine 44 are each glycosylated (N-linked (GlcNAc...) asparagine). 5 LRR repeats span residues 89–112, 113–136, 137–160, 161–183, and 184–205; these read SLKF…TNLK, SLTH…SELK, NLKV…SGLT, SLQV…HLPK, and LSQI…LQRF. N-linked (GlcNAc...) asparagine glycosylation is found at asparagine 149, asparagine 169, asparagine 188, and asparagine 214. Residues 233-253 form a helical membrane-spanning segment; sequence FLLILSAACVLCVSGLSFIMI. The Cytoplasmic segment spans residues 254 to 587; it reads TCFGKTRISG…IEDIRSVDAE (334 aa). Residues 307-581 form the Protein kinase domain; sequence SSSAEVLGKG…AQVLKLIEDI (275 aa). Serine 309 is subject to Phosphoserine. Residues 313–321 and lysine 335 each bind ATP; that span reads LGKGAFGTT. Serine 386 is subject to Phosphoserine. Threonine 462, threonine 463, threonine 466, and threonine 477 each carry phosphothreonine.

The protein localises to the cell membrane. The chain is Putative inactive receptor-like protein kinase At1g64210 from Arabidopsis thaliana (Mouse-ear cress).